The following is a 406-amino-acid chain: Cysteine desulfurase (406 aa).

Lys226 carries the N6-(pyridoxal phosphate)lysine modification. The active-site Cysteine persulfide intermediate is the Cys364.

The protein belongs to the class-V pyridoxal-phosphate-dependent aminotransferase family. Csd subfamily. Homodimer. Interacts with SufE and the SufBCD complex composed of SufB, SufC and SufD. The interaction with SufE is required to mediate the direct transfer of the sulfur atom from the S-sulfanylcysteine. Pyridoxal 5'-phosphate is required as a cofactor.

Its subcellular location is the cytoplasm. It carries out the reaction (sulfur carrier)-H + L-cysteine = (sulfur carrier)-SH + L-alanine. It catalyses the reaction L-selenocysteine + AH2 = hydrogenselenide + L-alanine + A + H(+). It functions in the pathway cofactor biosynthesis; iron-sulfur cluster biosynthesis. Functionally, cysteine desulfurases mobilize the sulfur from L-cysteine to yield L-alanine, an essential step in sulfur metabolism for biosynthesis of a variety of sulfur-containing biomolecules. Component of the suf operon, which is activated and required under specific conditions such as oxidative stress and iron limitation. Acts as a potent selenocysteine lyase in vitro, that mobilizes selenium from L-selenocysteine. Selenocysteine lyase activity is however unsure in vivo. This Salmonella heidelberg (strain SL476) protein is Cysteine desulfurase.